The following is a 339-amino-acid chain: Glycerol-3-phosphate dehydrogenase [NAD(P)+] (339 aa).

NADPH is bound by residues S15, Y16, H36, and K110. The sn-glycerol 3-phosphate site is built by K110, G139, and T141. Residue A143 coordinates NADPH. Sn-glycerol 3-phosphate is bound by residues K195, D248, S258, R259, and N260. Catalysis depends on K195, which acts as the Proton acceptor. Residue R259 participates in NADPH binding. Residues V283 and E285 each coordinate NADPH.

The protein belongs to the NAD-dependent glycerol-3-phosphate dehydrogenase family.

Its subcellular location is the cytoplasm. It catalyses the reaction sn-glycerol 3-phosphate + NAD(+) = dihydroxyacetone phosphate + NADH + H(+). The enzyme catalyses sn-glycerol 3-phosphate + NADP(+) = dihydroxyacetone phosphate + NADPH + H(+). It functions in the pathway membrane lipid metabolism; glycerophospholipid metabolism. Functionally, catalyzes the reduction of the glycolytic intermediate dihydroxyacetone phosphate (DHAP) to sn-glycerol 3-phosphate (G3P), the key precursor for phospholipid synthesis. This Shigella flexneri serotype 5b (strain 8401) protein is Glycerol-3-phosphate dehydrogenase [NAD(P)+].